A 69-amino-acid chain; its full sequence is Large ribosomal subunit protein bL31 (69 aa).

This sequence belongs to the bacterial ribosomal protein bL31 family. Type A subfamily. Part of the 50S ribosomal subunit.

Functionally, binds the 23S rRNA. This is Large ribosomal subunit protein bL31 from Magnetococcus marinus (strain ATCC BAA-1437 / JCM 17883 / MC-1).